The sequence spans 510 residues: AAA-ATPase At3g28540 (510 aa).

A helical transmembrane segment spans residues 7-25 (LFGFTGTTMASLMFFWSVY). ATP is bound at residue 246-253 (GPPGTGKS). The interval 460–510 (KEKAKKLAEEEKMKKAARDARRIKKKAEEEHKKKNKVEENGDVSHDNGNHI) is disordered.

This sequence belongs to the AAA ATPase family. BCS1 subfamily. Requires Mg(2+) as cofactor.

The protein localises to the membrane. It carries out the reaction ATP + H2O = ADP + phosphate + H(+). The sequence is that of AAA-ATPase At3g28540 from Arabidopsis thaliana (Mouse-ear cress).